A 700-amino-acid chain; its full sequence is Glycine--tRNA ligase beta subunit (700 aa).

It belongs to the class-II aminoacyl-tRNA synthetase family. As to quaternary structure, tetramer of two alpha and two beta subunits.

The protein resides in the cytoplasm. The enzyme catalyses tRNA(Gly) + glycine + ATP = glycyl-tRNA(Gly) + AMP + diphosphate. This Janthinobacterium sp. (strain Marseille) (Minibacterium massiliensis) protein is Glycine--tRNA ligase beta subunit.